Reading from the N-terminus, the 947-residue chain is Vacuolar membrane protease (947 aa).

Residues 1-15 (MRFKALLRAIFRFRK) are Cytoplasmic-facing. A helical transmembrane segment spans residues 16 to 36 (TNFSILLIITYAIIIALLVFD). Residues 37–358 (RSRYKLDLPN…GLFFVVVDTK (322 aa)) lie on the Vacuolar side of the membrane. N-linked (GlcNAc...) asparagine glycosylation is found at asparagine 46, asparagine 92, asparagine 108, and asparagine 121. Histidine 156 and aspartate 168 together coordinate Zn(2+). The active-site Proton acceptor is glutamate 200. 3 residues coordinate Zn(2+): glutamate 201, glutamate 226, and histidine 300. N-linked (GlcNAc...) asparagine glycosylation is present at asparagine 319. A helical membrane pass occupies residues 359–379 (HLFYADIFMLIVGPILLMMKA). At 380–391 (HLDKRRRLERSR) the chain is on the cytoplasmic side. Residues 392-412 (LVQLRLLLSLGLSVVFLLLLT) traverse the membrane as a helical segment. The Vacuolar portion of the chain corresponds to 413–428 (KSLNSFNPFVYSADYR). A helical membrane pass occupies residues 429 to 449 (TPLTGLFLLFVTVNYLIVTLA). The Cytoplasmic portion of the chain corresponds to 450-458 (ERLNPTESY). A helical transmembrane segment spans residues 459–479 (KTVAINQIFIIAWLMQLYITL). Over 480-489 (RMAKSDFTLT) the chain is Vacuolar. Residues 490–510 (GTYPLSIFSGCLIVALSLGLF) traverse the membrane as a helical segment. Residues 511–601 (GTKNKAVNDA…DKNSDFSKHY (91 aa)) lie on the Cytoplasmic side of the membrane. Composition is skewed to polar residues over residues 522–531 (NSSVRYASSQ) and 546–567 (NINQ…TDLH). The tract at residues 522–573 (NSSVRYASSQNDEDNPLPSQDRGENINQVRDTGNQEVTSNTNTDLHSNAEEV) is disordered. The chain crosses the membrane as a helical span at residues 602–622 (NWIVQFLCIVPISSFIFLFSL). Over 623–641 (DYTLDAIHKMVQETTDDVQ) the chain is Vacuolar. A helical transmembrane segment spans residues 642 to 662 (LICIIITIGVILLALPILPFI). Residues 663–669 (SKLNYQS) are Cytoplasmic-facing. The helical transmembrane segment at 670–690 (SVIIAIIGVLLFGKSLVMQPF) threads the bilayer. The Vacuolar portion of the chain corresponds to 691–947 (SEIAPLKVRF…LVVIKDKIQL (257 aa)). N-linked (GlcNAc...) asparagine glycosylation is found at asparagine 742, asparagine 784, asparagine 801, and asparagine 833.

Belongs to the peptidase M28 family. Zn(2+) serves as cofactor.

Its subcellular location is the vacuole membrane. Functionally, may be involved in vacuolar sorting and osmoregulation. The protein is Vacuolar membrane protease of Candida glabrata (strain ATCC 2001 / BCRC 20586 / JCM 3761 / NBRC 0622 / NRRL Y-65 / CBS 138) (Yeast).